Reading from the N-terminus, the 365-residue chain is DNA replication and repair protein RecF (365 aa).

An ATP-binding site is contributed by 30-37; sequence GRNAQGKT.

The protein belongs to the RecF family.

Its subcellular location is the cytoplasm. In terms of biological role, the RecF protein is involved in DNA metabolism; it is required for DNA replication and normal SOS inducibility. RecF binds preferentially to single-stranded, linear DNA. It also seems to bind ATP. This Streptococcus pneumoniae (strain 70585) protein is DNA replication and repair protein RecF.